Here is a 268-residue protein sequence, read N- to C-terminus: Putative hydro-lyase ACICU_01268 (268 aa).

It belongs to the D-glutamate cyclase family.

In Acinetobacter baumannii (strain ACICU), this protein is Putative hydro-lyase ACICU_01268.